The sequence spans 178 residues: CD209 antigen-like protein C (178 aa).

Residues Cys48 and Cys59 are joined by a disulfide bond. In terms of domain architecture, C-type lectin spans 54–169; sequence VFQGNCYFFS…CTIKKYWICK (116 aa). N-linked (GlcNAc...) asparagine glycosylation is present at Asn70. Intrachain disulfides connect Cys76-Cys168 and Cys147-Cys160. 5 residues coordinate Ca(2+): Glu138, Asn140, Glu145, Asn156, and Asp157.

Probable pathogen-recognition receptor. May recognize in a calcium-dependent manner high mannose N-linked oligosaccharides in a variety of pathogen antigens. The sequence is that of CD209 antigen-like protein C (Cd209c) from Mus musculus (Mouse).